The following is a 141-amino-acid chain: VLSGSDKNNVKGVFGKIGGHAEEYGAETLERMFATYPQTKTYFPHFDLQHGSAQVKAHGKKVAAALVEAANHIDDISGALSKLSDLHAQKLRVDPVNFKLLGQCFLVVVAIHHPSVLTPEVHASLDKFLCAVGNVLTAKYR.

Residues V1–R141 enclose the Globin domain. O2 is bound at residue H58. H87 is a heme b binding site.

This sequence belongs to the globin family. As to quaternary structure, heterotetramer of two alpha chains and two beta chains. Red blood cells.

Its function is as follows. Involved in oxygen transport from the lung to the various peripheral tissues. The sequence is that of Hemoglobin subunit alpha-1 from Stercorarius maccormicki (South polar skua).